A 332-amino-acid polypeptide reads, in one-letter code: L-lactate dehydrogenase A chain (332 aa).

NAD(+) contacts are provided by residues 29–57 and R99; that span reads GAVG…VEDK. The substrate site is built by R106, N138, and R169. Residue N138 participates in NAD(+) binding. H193 functions as the Proton acceptor in the catalytic mechanism. T248 contacts substrate.

Belongs to the LDH/MDH superfamily. LDH family. Homotetramer.

The protein localises to the cytoplasm. The catalysed reaction is (S)-lactate + NAD(+) = pyruvate + NADH + H(+). The protein operates within fermentation; pyruvate fermentation to lactate; (S)-lactate from pyruvate: step 1/1. In terms of biological role, interconverts simultaneously and stereospecifically pyruvate and lactate with concomitant interconversion of NADH and NAD(+). This is L-lactate dehydrogenase A chain (LDHA) from Columba livia (Rock dove).